We begin with the raw amino-acid sequence, 174 residues long: Large ribosomal subunit protein uL18 (174 aa).

The protein belongs to the universal ribosomal protein uL18 family. In terms of assembly, part of the 50S ribosomal subunit. Contacts the 5S and 23S rRNAs.

In terms of biological role, this is one of the proteins that bind and probably mediate the attachment of the 5S RNA into the large ribosomal subunit, where it forms part of the central protuberance. The protein is Large ribosomal subunit protein uL18 of Methanoregula boonei (strain DSM 21154 / JCM 14090 / 6A8).